Here is a 188-residue protein sequence, read N- to C-terminus: UPF0301 protein CPn_0139/CP_0633/CPj0139/CpB0140 (188 aa).

It belongs to the UPF0301 (AlgH) family.

The polypeptide is UPF0301 protein CPn_0139/CP_0633/CPj0139/CpB0140 (Chlamydia pneumoniae (Chlamydophila pneumoniae)).